Reading from the N-terminus, the 400-residue chain is 3-hydroxykynurenine transaminase (400 aa).

A binds to and confers specificity for 3-hydroxykynurenine; shared with dimeric partner region spans residues Ser43 to Asn44. Pyridoxal 5'-phosphate is bound by residues Ser77 to His79, Ser154, and Gln204. Ser154 contacts substrate. An N6-(pyridoxal phosphate)lysine modification is found at Lys205. Pyridoxal 5'-phosphate contacts are provided by Tyr256 and Thr259. Arg356 serves as a coordination point for substrate.

The protein belongs to the class-V pyridoxal-phosphate-dependent aminotransferase family. In terms of assembly, homodimer. May form homotetramer. Requires pyridoxal 5'-phosphate as cofactor.

The protein localises to the peroxisome. The enzyme catalyses glyoxylate + L-alanine = glycine + pyruvate. The catalysed reaction is L-kynurenine + glyoxylate = kynurenate + glycine + H2O. It catalyses the reaction 3-hydroxy-L-kynurenine + glyoxylate = xanthurenate + glycine + H2O. It carries out the reaction 3-hydroxy-L-kynurenine + pyruvate = xanthurenate + L-alanine + H2O. The enzyme catalyses L-kynurenine + pyruvate = kynurenate + L-alanine + H2O. The catalysed reaction is 2-oxobutanoate + L-alanine = (2S)-2-aminobutanoate + pyruvate. It catalyses the reaction L-phenylalanine + pyruvate = 3-phenylpyruvate + L-alanine. It carries out the reaction L-serine + pyruvate = 3-hydroxypyruvate + L-alanine. The enzyme catalyses L-cysteine + pyruvate = 2-oxo-3-sulfanylpropanoate + L-alanine. The catalysed reaction is 3-hydroxy-L-kynurenine + oxaloacetate = 4-(2-amino-3-hydroxyphenyl)-2,4-dioxobutanoate + L-aspartate. It catalyses the reaction 3-hydroxy-L-kynurenine + 3-phenylpyruvate = 4-(2-amino-3-hydroxyphenyl)-2,4-dioxobutanoate + L-phenylalanine. It carries out the reaction L-kynurenine + oxaloacetate = 4-(2-aminophenyl)-2,4-dioxobutanoate + L-aspartate. The enzyme catalyses 3-phenylpyruvate + L-kynurenine = 4-(2-aminophenyl)-2,4-dioxobutanoate + L-phenylalanine. Its pathway is amino-acid degradation; L-kynurenine degradation; kynurenate from L-kynurenine: step 1/2. Catalyzes the pyridoxal 5'-phosphate-dependent transamination of both 3-hydroxykynurenine and L-kynurenine to xanthurenic acid and kynurenic acid, respectively, preferentially using the alpha-ketoacid pyruvate, glyoxylate or oxaloacetate as the amino group acceptor. The affinity and catalytic efficiency for 3-hydroxykynurenine is higher than for L-kynurenine. Involved in the detoxification of cytotoxic metabolite 3-hydroxykynurenine generated by the hydroxylation of L-kynurenine, an intermediate in the tryptophan catabolism pathway. Also catalyzes, although with a lesser efficiency, the transamination of alanine with glyoxylate as an amino group acceptor. May play a role in the detoxification of glyoxylate, a toxic plant metabolite from the diet. The chain is 3-hydroxykynurenine transaminase from Aedes aegypti (Yellowfever mosquito).